The primary structure comprises 898 residues: Sodium/hydrogen exchanger 5 (898 aa).

The Cytoplasmic segment spans residues 1 to 48 (MLSAALLLLPGLPLAGAGATEEPTQESGPLGEPPPGLALFRWQWHEVE). The chain crosses the membrane as a helical span at residues 49-69 (APYLVALWILVASLAKIVFHL). At 70 to 76 (SRKVTSL) the chain is on the extracellular side. A helical transmembrane segment spans residues 77–97 (VPESCLLILLGLVLGGIVLAV). Residues 98–106 (AKKAEYQLE) are Cytoplasmic-facing. Residues 107–127 (PGTFFLFLLPPIVLDSGYFMP) traverse the membrane as a helical segment. The Extracellular portion of the chain corresponds to 128–137 (SRLFFDNLGA). Residues 138 to 158 (ILTYAVVGTLWNAFTTGVALW) traverse the membrane as a helical segment. Residues 159-176 (GLQQAGLVAPRVQAGLLD) lie on the Cytoplasmic side of the membrane. Residues 177–197 (FLLFGSLISAVDPVAVLAVFE) traverse the membrane as a helical segment. At 198 to 203 (EVHVNQ) the chain is on the extracellular side. A helical transmembrane segment spans residues 204-224 (TLFIIIFGESLLNDAVTVVLY). Topologically, residues 225–249 (KVCNSFVEMGSANVQATDYLKGVAS) are cytoplasmic. Residues 250-270 (LFVVSLGGAAVGLVFAFLLAL) form a helical membrane-spanning segment. The Extracellular segment spans residues 271 to 279 (TTRFTKRVR). A helical transmembrane segment spans residues 280-300 (IIEPLLVFLLAYAAYLTAEMA). Topologically, residues 301–334 (SLSAILAVTMCGLGCKKYVEANISHKSRTAVKYT) are cytoplasmic. The chain crosses the membrane as a helical span at residues 335-355 (MKTLASCAETVIFMLLGISAV). Residues 356 to 363 (DSSKWAWD) are Extracellular-facing. A helical transmembrane segment spans residues 364 to 384 (SGLVLGTLFFILFFRALGVVL). Topologically, residues 385 to 401 (QTWALNQFRLVPLDKID) are cytoplasmic. A helical membrane pass occupies residues 402–422 (QVVMSYGGLRGAVAFALVILL). Residues 423–431 (DRTKVPAKD) lie on the Extracellular side of the membrane. The helical transmembrane segment at 432–452 (YFVATTIVVVFFTVIVQGLTI) threads the bilayer. The Cytoplasmic portion of the chain corresponds to 453–898 (KPLVKWLRVK…CIQFNRGGRL (446 aa)). 2 disordered regions span residues 660 to 693 (FTKSKPRPRKTSHKKKDGVANPEATNGKPPRDLG) and 826 to 866 (EEPQ…PQQE). Basic residues predominate over residues 663 to 675 (SKPRPRKTSHKKK). The segment covering 857-866 (ESSADIPQQE) has biased composition (polar residues).

It belongs to the monovalent cation:proton antiporter 1 (CPA1) transporter (TC 2.A.36) family. Interacts with CHP1 and CHP2. Interacts with ARRB2; facilitates the endocytosis of SLC9A5 from the plasma membrane. Interacts with RACK1; this interaction positively regulates SLC9A5 activity and promote SLC9A5 localization to focal adhesions. Interacts with SCAMP2; this interaction regulates SLC9A5 cell-surface targeting and SLC9A5 activity. Post-translationally, phosphorylated by PRKAA2; promotes its accumulation at the cell surface. Phosphorylated by CSNK2A1 in a manner favoring its beta-arrestin binding and endocytosis. As to expression, highest expression level is detected in brain. Expressed in hippocampal neurons (at protein level).

The protein localises to the cell membrane. It localises to the recycling endosome membrane. It is found in the cell projection. Its subcellular location is the dendritic spine membrane. The protein resides in the synaptic cell membrane. The protein localises to the cell junction. It localises to the focal adhesion. The catalysed reaction is Na(+)(in) + H(+)(out) = Na(+)(out) + H(+)(in). Plasma membrane Na(+)/H(+) antiporter. Mediates the electroneutral exchange of intracellular H(+) ions for extracellular Na(+) in 1:1 stoichiometry. Responsible for regulating intracellular pH homeostasis, in particular in neural tissues. Acts as a negative regulator of dendritic spine growth. Plays a role in postsynaptic remodeling and signaling. Can also contribute to organellar pH regulation, with consequences for receptor tyrosine kinase trafficking. This chain is Sodium/hydrogen exchanger 5 (Slc9a5), found in Mus musculus (Mouse).